We begin with the raw amino-acid sequence, 144 residues long: Phosphomevalonate dehydratase small subunit (144 aa).

Catalysis depends on S65, which acts as the Proton acceptor.

It belongs to the AcnX type II small subunit family. In terms of assembly, heterodimer composed of a large subunit (PMDh-L) and a small subunit (PMDh-S).

It carries out the reaction (R)-5-phosphomevalonate = (2E)-3-methyl-5-phosphooxypent-2-enoate + H2O. Its pathway is isoprenoid biosynthesis; isopentenyl diphosphate biosynthesis via mevalonate pathway. Functionally, component of a hydro-lyase that catalyzes the dehydration of mevalonate 5-phosphate (MVA5P) to form trans-anhydromevalonate 5-phosphate (tAHMP). Involved in the archaeal mevalonate (MVA) pathway, which provides fundamental precursors for isoprenoid biosynthesis, such as isopentenyl diphosphate (IPP) and dimethylallyl diphosphate (DMAPP). This Methanosarcina mazei (strain ATCC BAA-159 / DSM 3647 / Goe1 / Go1 / JCM 11833 / OCM 88) (Methanosarcina frisia) protein is Phosphomevalonate dehydratase small subunit.